The chain runs to 353 residues: MKVAILGAGCYRTHAACGITNFARAAEVAKKVGIPEITMTHSTITMGAELLHLVDEIDEVVVSDPCFAEEPGLVIIDEFDPKEVMEAHLAGEPEKVMPAIRDAVKAKAKEVPKPPKGCIHFVHPEKVGLKVTSDDVEAVKDADIIITWLPKGGSQPAIIKKFVDAIKEGAIVTHACTIPTPKFAKIFKDLGRDDLNIISYHPGAVPEMKGQVFISEGYASEEAVEKMYCIAKEARGTAYKMPANLISPVCDMGSAVTAPVYAAVLAYRDAVTKILGAPADFAQMMADEAITQILELMRKEGINNMEKTLDPKALTGTADSMCFGPLSDILPPALKVLEKHAAEEESCCCELKK.

Homotetramer.

It catalyses the reaction 5,10-methenyl-5,6,7,8-tetrahydromethanopterin + H2 = 5,10-methylenetetrahydromethanopterin + H(+). The protein operates within one-carbon metabolism; methanogenesis from CO(2); 5,10-methylene-5,6,7,8-tetrahydromethanopterin from 5,10-methenyl-5,6,7,8-tetrahydromethanopterin (hydrogen route): step 1/1. Catalyzes the reversible reduction of methenyl-H(4)MPT(+) to methylene-H(4)MPT. The sequence is that of 5,10-methenyltetrahydromethanopterin hydrogenase (hmd) from Methanothermococcus thermolithotrophicus (Methanococcus thermolithotrophicus).